Consider the following 189-residue polypeptide: Elongation factor P 2 (189 aa).

Belongs to the elongation factor P family.

It is found in the cytoplasm. The protein operates within protein biosynthesis; polypeptide chain elongation. In terms of biological role, involved in peptide bond synthesis. Stimulates efficient translation and peptide-bond synthesis on native or reconstituted 70S ribosomes in vitro. Probably functions indirectly by altering the affinity of the ribosome for aminoacyl-tRNA, thus increasing their reactivity as acceptors for peptidyl transferase. The polypeptide is Elongation factor P 2 (Mesorhizobium japonicum (strain LMG 29417 / CECT 9101 / MAFF 303099) (Mesorhizobium loti (strain MAFF 303099))).